The primary structure comprises 101 residues: Protein Tat (101 aa).

The interval 1–24 is interaction with human CREBBP; it reads MEPVDPSLDPWNHPGSQPTTPCTK. A transactivation region spans residues 1 to 48; it reads MEPVDPSLDPWNHPGSQPTTPCTKCYCKRCCFHCQWCFTTKGLGISYG. Positions 22, 25, and 27 each coordinate Zn(2+). The cysteine-rich stretch occupies residues 22–37; that stretch reads CTKCYCKRCCFHCQWC. K28 is modified (N6-acetyllysine; by host PCAF). The Zn(2+) site is built by C30, H33, C34, and C37. A core region spans residues 38–48; the sequence is FTTKGLGISYG. The segment covering 48-58 has biased composition (basic residues); that stretch reads GRKKRRQRHRT. Residues 48-101 form a disordered region; it reads GRKKRRQRHRTPQSSQVHQNSLPKQPLSQARGDPTGPKESKKEVESKAKTDPCA. The Nuclear localization signal, RNA-binding (TAR), and protein transduction signature appears at 49 to 57; it reads RKKRRQRHR. An interaction with the host capping enzyme RNGTT region spans residues 49 to 86; that stretch reads RKKRRQRHRTPQSSQVHQNSLPKQPLSQARGDPTGPKE. 2 positions are modified to N6-acetyllysine; by host EP300 and GCN5L2: K50 and K51. R52 and R53 each carry asymmetric dimethylarginine; by host PRMT6. Polar residues predominate over residues 59–75; it reads PQSSQVHQNSLPKQPLS. K71 participates in a covalent cross-link: Glycyl lysine isopeptide (Lys-Gly) (interchain with G-Cter in ubiquitin). Residues 78–80 carry the Cell attachment site motif; it reads RGD. A compositionally biased stretch (basic and acidic residues) spans 83 to 101; that stretch reads GPKESKKEVESKAKTDPCA.

It belongs to the lentiviruses Tat family. In terms of assembly, interacts with host CCNT1. Associates with the P-TEFb complex composed at least of Tat, P-TEFb (CDK9 and CCNT1), TAR RNA, RNA Pol II. Recruits the HATs CREBBP, TAF1/TFIID, EP300, PCAF and GCN5L2. Interacts with host KAT5/Tip60; this interaction targets the latter to degradation. Interacts with the host deacetylase SIRT1. Interacts with host capping enzyme RNGTT; this interaction stimulates RNGTT. Binds to host KDR, and to the host integrins ITGAV/ITGB3 and ITGA5/ITGB1. Interacts with host KPNB1/importin beta-1 without previous binding to KPNA1/importin alpha-1. Interacts with EIF2AK2. Interacts with host nucleosome assembly protein NAP1L1; this interaction may be required for the transport of Tat within the nucleus, since the two proteins interact at the nuclear rim. Interacts with host C1QBP/SF2P32; this interaction involves lysine-acetylated Tat. Interacts with the host chemokine receptors CCR2, CCR3 and CXCR4. Interacts with host DPP4/CD26; this interaction may trigger an anti-proliferative effect. Interacts with host LDLR. Interacts with the host extracellular matrix metalloproteinase MMP1. Interacts with host PRMT6; this interaction mediates Tat's methylation. Interacts with, and is ubiquitinated by MDM2/Hdm2. Interacts with host PSMC3 and HTATIP2. Interacts with STAB1; this interaction may overcome SATB1-mediated repression of IL2 and IL2RA (interleukin) in T cells by binding to the same domain than HDAC1. Interacts (when acetylated) with human CDK13, thereby increasing HIV-1 mRNA splicing and promoting the production of the doubly spliced HIV-1 protein Nef. Interacts with host TBP; this interaction modulates the activity of transcriptional pre-initiation complex. Interacts with host RELA. Interacts with host PLSCR1; this interaction negatively regulates Tat transactivation activity by altering its subcellular distribution. Post-translationally, asymmetrical arginine methylation by host PRMT6 seems to diminish the transactivation capacity of Tat and affects the interaction with host CCNT1. Acetylation by EP300, CREBBP, GCN5L2/GCN5 and PCAF regulates the transactivation activity of Tat. EP300-mediated acetylation of Lys-50 promotes dissociation of Tat from the TAR RNA through the competitive binding to PCAF's bromodomain. In addition, the non-acetylated Tat's N-terminus can also interact with PCAF. PCAF-mediated acetylation of Lys-28 enhances Tat's binding to CCNT1. Lys-50 is deacetylated by SIRT1. In terms of processing, polyubiquitination by host MDM2 does not target Tat to degradation, but activates its transactivation function and fosters interaction with CCNT1 and TAR RNA. Post-translationally, phosphorylated by EIF2AK2 on serine and threonine residues adjacent to the basic region important for TAR RNA binding and function. Phosphorylation of Tat by EIF2AK2 is dependent on the prior activation of EIF2AK2 by dsRNA.

Its subcellular location is the host nucleus. It is found in the host nucleolus. The protein resides in the host cytoplasm. The protein localises to the secreted. In terms of biological role, transcriptional activator that increases RNA Pol II processivity, thereby increasing the level of full-length viral transcripts. Recognizes a hairpin structure at the 5'-LTR of the nascent viral mRNAs referred to as the transactivation responsive RNA element (TAR) and recruits the cyclin T1-CDK9 complex (P-TEFb complex) that will in turn hyperphosphorylate the RNA polymerase II to allow efficient elongation. The CDK9 component of P-TEFb and other Tat-activated kinases hyperphosphorylate the C-terminus of RNA Pol II that becomes stabilized and much more processive. Other factors such as HTATSF1/Tat-SF1, SUPT5H/SPT5, and HTATIP2 are also important for Tat's function. Besides its effect on RNA Pol II processivity, Tat induces chromatin remodeling of proviral genes by recruiting the histone acetyltransferases (HATs) CREBBP, EP300 and PCAF to the chromatin. This also contributes to the increase in proviral transcription rate, especially when the provirus integrates in transcriptionally silent region of the host genome. To ensure maximal activation of the LTR, Tat mediates nuclear translocation of NF-kappa-B by interacting with host RELA. Through its interaction with host TBP, Tat may also modulate transcription initiation. Tat can reactivate a latently infected cell by penetrating in it and transactivating its LTR promoter. In the cytoplasm, Tat is thought to act as a translational activator of HIV-1 mRNAs. Functionally, extracellular circulating Tat can be endocytosed by surrounding uninfected cells via the binding to several surface receptors such as CD26, CXCR4, heparan sulfate proteoglycans (HSPG) or LDLR. Neurons are rarely infected, but they internalize Tat via their LDLR. Through its interaction with nuclear HATs, Tat is potentially able to control the acetylation-dependent cellular gene expression. Modulates the expression of many cellular genes involved in cell survival, proliferation or in coding for cytokines or cytokine receptors. Tat plays a role in T-cell and neurons apoptosis. Tat induced neurotoxicity and apoptosis probably contribute to neuroAIDS. Circulating Tat also acts as a chemokine-like and/or growth factor-like molecule that binds to specific receptors on the surface of the cells, affecting many cellular pathways. In the vascular system, Tat binds to ITGAV/ITGB3 and ITGA5/ITGB1 integrins dimers at the surface of endothelial cells and competes with bFGF for heparin-binding sites, leading to an excess of soluble bFGF. The sequence is that of Protein Tat from Human immunodeficiency virus type 1 group M subtype F1 (isolate VI850) (HIV-1).